The chain runs to 91 residues: Probable Fe(2+)-trafficking protein (91 aa).

The protein belongs to the Fe(2+)-trafficking protein family.

Functionally, could be a mediator in iron transactions between iron acquisition and iron-requiring processes, such as synthesis and/or repair of Fe-S clusters in biosynthetic enzymes. This chain is Probable Fe(2+)-trafficking protein, found in Histophilus somni (strain 129Pt) (Haemophilus somnus).